Here is an 885-residue protein sequence, read N- to C-terminus: Putative membrane protein YdgH (885 aa).

Transmembrane regions (helical) follow at residues 9–29 (WAIAAIVLALTVVLSLFSPNL), 181–201 (IIGLLLIVFRSVVTPFIPIVV), 202–222 (VGFSYLISQSILGILVYNVDF), 227–247 (FTQTFLVAILFGIGTDYCILL), 278–298 (ISGFAVLIGFSALGFAKFAIF), 304–324 (VAVGVGILMIILYTLLPLFMV), and 354–374 (VARPFLFIVITVVITLPFILT). Residues 498–518 (MAGQTGSASNGGSGGSLGDAA) are disordered. Helical transmembrane passes span 716 to 736 (MVIMIIGLFIVLTILFRSMIM), 740 to 760 (MIASLLLTYYTSISITELIFV), 772 to 792 (VPFFSFVILIALGVDYSIFLL), 817 to 837 (VIITAAIILAGTFAAMMPSGV), and 847 to 867 (IIIGLLLYGLVILPLFIPAII).

The protein belongs to the resistance-nodulation-cell division (RND) (TC 2.A.6) family. MmpL subfamily.

The protein resides in the cell membrane. The sequence is that of Putative membrane protein YdgH (ydgH) from Bacillus subtilis (strain 168).